A 436-amino-acid chain; its full sequence is Serine/threonine-protein kinase 40 (436 aa).

Residues 1–10 (MKRRASDRGA) show a composition bias toward basic and acidic residues. The disordered stretch occupies residues 1–25 (MKRRASDRGAGETSARAKALGSGIS). The Protein kinase domain occupies 35–332 (FILGPRLGNS…DVLEALSSII (298 aa)). Residues 41–49 (LGNSPVPSI) and K66 each bind ATP. D197 acts as the Proton acceptor in catalysis. The tract at residues 396-417 (RSWVPKRQSGAGVPPVRRLGHD) is disordered.

The protein belongs to the protein kinase superfamily. CAMK Ser/Thr protein kinase family.

It is found in the nucleus. The protein resides in the cytoplasm. The enzyme catalyses L-seryl-[protein] + ATP = O-phospho-L-seryl-[protein] + ADP + H(+). It catalyses the reaction L-threonyl-[protein] + ATP = O-phospho-L-threonyl-[protein] + ADP + H(+). Functionally, may be a negative regulator of NF-kappa-B and p53-mediated gene transcription. The polypeptide is Serine/threonine-protein kinase 40 (STK40) (Bos taurus (Bovine)).